The primary structure comprises 356 residues: Myricetin 7/4'-O-methyltransferase 2 (356 aa).

Aspartate 222 provides a ligand contact to S-adenosyl-L-methionine. Catalysis depends on histidine 260, which acts as the Proton acceptor.

It belongs to the class I-like SAM-binding methyltransferase superfamily. Cation-independent O-methyltransferase family. In terms of assembly, homodimer.

The catalysed reaction is quercetin + S-adenosyl-L-methionine = rhamnetin + S-adenosyl-L-homocysteine + H(+). It carries out the reaction kaempferol + S-adenosyl-L-methionine = kaempferide + S-adenosyl-L-homocysteine + H(+). The enzyme catalyses myricetin + S-adenosyl-L-methionine = 7-O-methylmyricetin + S-adenosyl-L-homocysteine + H(+). It catalyses the reaction kaempferide + S-adenosyl-L-methionine = 7,4'-O-dimethylkaempferol + S-adenosyl-L-homocysteine + H(+). The catalysed reaction is isorhamnetin + S-adenosyl-L-methionine = 3',4'-O-dimethylquercetin + S-adenosyl-L-homocysteine + 2 H(+). It carries out the reaction 3',4',5,7-tetrahydroxy-3-methoxyflavone + S-adenosyl-L-methionine = 3',4',5-trihydroxy-3,7-dimethoxyflavone + S-adenosyl-L-homocysteine + H(+). The enzyme catalyses rhamnetin + S-adenosyl-L-methionine = 7,4'-O-dimethylquercetin + S-adenosyl-L-homocysteine + H(+). It catalyses the reaction syringetin + S-adenosyl-L-methionine = 7,3',5'-O-trimethylmyricetin + S-adenosyl-L-homocysteine + H(+). The catalysed reaction is 3',4',5'-O-trimethylmyricetin + S-adenosyl-L-methionine = 7,3',4',5'-O-tetramethylmyricetin + S-adenosyl-L-homocysteine. It functions in the pathway flavonoid metabolism. Its function is as follows. Flavonoid 7/4'-O-methyltransferase involved in the biosynthesis of polymethoxylated flavonoids natural products such as myricetin derivatives, aroma compounds possessing antioxidant properties and exhibiting pharmacological activities such as anti-carcinogen, anti-viral, anti-thrombotic, anti-diabetic, anti-atherosclerotic, and anti-inflammatory effects. Catalyzes S-adenosylmethionine-dependent regioselective 7/4'-O-methylation of flavonoids; active on various hydroxylated flavonoid substrates. This Solanum lycopersicum (Tomato) protein is Myricetin 7/4'-O-methyltransferase 2.